A 470-amino-acid chain; its full sequence is Synaptotagmin-17 (470 aa).

The segment at 54 to 112 (PPWLMASRSNDKDGDSVHTASDVPLTPRTNSPDGRRSSSDTSKSTYSLTRRISSLDSRR) is disordered. Over residues 92–112 (SDTSKSTYSLTRRISSLDSRR) the composition is skewed to low complexity. 2 positions are modified to phosphoserine: S114 and S115. 2 C2 domains span residues 180–306 (QLGM…HWWK) and 317–451 (ELGE…EQWH).

Belongs to the synaptotagmin family.

The protein localises to the membrane. Plays a role in dendrite formation by melanocytes. This is Synaptotagmin-17 (Syt17) from Mus musculus (Mouse).